Here is a 1715-residue protein sequence, read N- to C-terminus: Neurexin-2 (1715 aa).

An N-terminal signal peptide occupies residues methionine 1–leucine 29. One can recognise a Laminin G-like 1 domain in the interval glutamate 30 to cysteine 206. Residues glutamate 30–threonine 1639 are Extracellular-facing. Asparagine 60 is a glycosylation site (N-linked (GlcNAc...) asparagine). Residues alanine 202–serine 242 enclose the EGF-like 1 domain. 3 cysteine pairs are disulfide-bonded: cysteine 206-cysteine 219, cysteine 213-cysteine 229, and cysteine 231-cysteine 241. 2 Laminin G-like domains span residues valine 289–cysteine 486 and aspartate 493–cysteine 686. Aspartate 335 is a binding site for Ca(2+). N-linked (GlcNAc...) asparagine glycosylation occurs at asparagine 338. Ca(2+)-binding residues include leucine 352 and methionine 420. 5 disulfides stabilise this stretch: cysteine 450–cysteine 486, cysteine 657–cysteine 686, cysteine 694–cysteine 705, cysteine 699–cysteine 714, and cysteine 716–cysteine 726. The region spanning threonine 690–glutamate 727 is the EGF-like 2 domain. Laminin G-like domains lie at valine 732–cysteine 907 and aspartate 921–cysteine 1096. Ca(2+) contacts are provided by aspartate 779 and leucine 796. The N-linked (GlcNAc...) asparagine glycan is linked to asparagine 844. Arginine 857 contributes to the Ca(2+) binding site. Disulfide bonds link cysteine 1068/cysteine 1096, cysteine 1103/cysteine 1114, cysteine 1108/cysteine 1123, and cysteine 1125/cysteine 1135. An EGF-like 3 domain is found at proline 1099–asparagine 1136. The Laminin G-like 6 domain maps to threonine 1140–serine 1348. Aspartate 1192 and valine 1209 together coordinate Ca(2+). Residue asparagine 1239 is glycosylated (N-linked (GlcNAc...) asparagine). Ca(2+)-binding residues include isoleucine 1291 and asparagine 1293. Serine 1403 is a glycosylation site (O-linked (Xyl...) (heparan sulfate) serine). 3 disordered regions span residues alanine 1461–threonine 1511, leucine 1529–alanine 1549, and leucine 1583–proline 1626. Residues glycine 1640–methionine 1660 traverse the membrane as a helical segment. The Cytoplasmic portion of the chain corresponds to tyrosine 1661–valine 1715. Residues asparagine 1682 to valine 1715 are disordered.

Belongs to the neurexin family. In terms of assembly, the laminin G-like domain 1 binds to NXPH1. Interacts with PATJ. Interacts with CBLN1, CBLN2 and, less avidly, with CBLN4. Specific isoforms bind neuroligins NLGN1, NLGN2 and NLGN3. Isoform 5c/alpha-2C binds to alpha-dystroglycan. Interacts (via Laminin G-like 1 domain) with IGSF21 (Ig-like 1 domain) in a trans-interaction manner. Interacts with CLSTN3. O-glycosylated; contains heparan sulfate. Heparan sulfate attachment is required for synapse development by mediating interactions with neuroligins. In terms of tissue distribution, brain (neuronal synapse).

The protein localises to the presynaptic cell membrane. Functionally, neuronal cell surface protein that may be involved in cell recognition and cell adhesion. May mediate intracellular signaling. The chain is Neurexin-2 (Nrxn2) from Rattus norvegicus (Rat).